The primary structure comprises 246 residues: MAVTMRQMLEAGVHFGHQTRFWNPKMAPFIFGHRNKIHIINLEKTLPMFNDAQKYVRQLAANRGTILFVGTKRQSRDTIAQEAQRAGMPYVNARWLGGMMTNFKTLKVSIKRLKDMEAAVEAGELEKMSKKEALLFEREIAKLQKSIGGVKDMGGIPDAIFVVDVGYHKIAVTEANKLGVPVIAVVDTNHSPEGVDYVIPGNDDSSKAVALYAEGVADAILEGRANAVNEVVQAVRGDDEYVEENA.

This sequence belongs to the universal ribosomal protein uS2 family.

The chain is Small ribosomal subunit protein uS2 from Burkholderia thailandensis (strain ATCC 700388 / DSM 13276 / CCUG 48851 / CIP 106301 / E264).